Reading from the N-terminus, the 672-residue chain is MESFENKGFLDIEEGIQWIKKNSENLSSSKKTILARLQQFHKLCSEVGLNQHSISSLLDVILSKKTHFDKNHVQLLIKCLYPNELISQTIAIRIISSLDPHGLRCSYAIQAKLLNWLIHVYEFLDGNNLLCRYYGVLFHFLDFLTLRPYISNLLVLLTKHYHVKSFRIHQLLALYQKPGNTADPYLLALILTYKQHFPDVIVGSYTYRKHGSVRLDSEWIAATKAILNRQSEDVPLETWSSEKRKRQSSLIPDLITMKNTSSSYSLEELTSVQQMGLVYEKIVFPSRIAAVLKSKLFLIFLFLKNKNVYYSRLDEWLHITLNYGLALRSGSNNQEEEVLHLLYKYLLFSPKFPKSLLQYVITFFSKPNITEENYNLLTLLVTHIPITTDSSYFNSLLKEFEQFILQKNAEFCSKHLNILWLWLFRMLNLRIASMGNNHTLLEKCLLITNHATFLVSHFSWDVSLAYQLSRLFQLYYKILTKIRKQIEPNIPPKELIYVLFFQPSAFYINSMVGLLLLTKNYQERLMDSRIDAISKFTHSYLKSLSEIILLKEKRAILSFLQLWEPFKSDYSQFLPIATRIANDHPYAQRVFSLTCAPQFFSYINGYQIYLQQTNPATGSIPLKPIQEETFGAFQSNLHLSDSWEDFQKNFIIYLKKKGYLAISDFLLSTLNR.

The protein belongs to the CENP-I/CTF3 family. As to quaternary structure, component of the inner kinetochore constitutive centromere-associated network (CCAN) (also known as central kinetochore Sim4 complex in fission yeast), which is composed of at least cnl2, cnp3, cnp20, fta1, fta2, fta3, fta4, fta6, fta7, mal2, mhf1, mhf2, mis6, mis15, mis17, sim4 and wip1. Interacts with cnp1, sim4, mis15 and mis17.

The protein resides in the nucleus. The protein localises to the chromosome. It localises to the centromere. In terms of biological role, component of the kinetochore, a multiprotein complex that assembles on centromeric DNA and attaches chromosomes to spindle microtubules, mediating chromosome segregation and sister chromatid segregation during meiosis and mitosis. Component of the inner kinetochore constitutive centromere-associated network (CCAN), which serves as a structural platform for outer kinetochore assembly. Required for the localization of cnp1 to the centromere. This Schizosaccharomyces pombe (strain 972 / ATCC 24843) (Fission yeast) protein is Inner kinetochore subunit mis6 (mis6).